The following is a 155-amino-acid chain: Transcriptional repressor NrdR (155 aa).

Residues 3 to 34 fold into a zinc finger; sequence CPFCGNIDTQVKDSRPAEDHVSIRRRRFCPAC. Residues 49 to 139 enclose the ATP-cone domain; sequence LVVIKSSGKR…VYKNFQAADD (91 aa).

It belongs to the NrdR family. It depends on Zn(2+) as a cofactor.

Functionally, negatively regulates transcription of bacterial ribonucleotide reductase nrd genes and operons by binding to NrdR-boxes. The polypeptide is Transcriptional repressor NrdR (Cereibacter sphaeroides (strain ATCC 17029 / ATH 2.4.9) (Rhodobacter sphaeroides)).